Here is a 369-residue protein sequence, read N- to C-terminus: Iron-sulfur cluster carrier protein (369 aa).

Residue 115–122 coordinates ATP; it reads GKGGVGKS.

It belongs to the Mrp/NBP35 ATP-binding proteins family. Homodimer. Holo-ApbC forms a mixture of homodimers and homotetramers.

In terms of biological role, binds and transfers iron-sulfur (Fe-S) clusters to target apoproteins. Can hydrolyze ATP. Both activities are required for function in vivo, but the ability to hydrolyze ATP is not necessary for Fe-S cluster transfer. This Salmonella typhimurium (strain LT2 / SGSC1412 / ATCC 700720) protein is Iron-sulfur cluster carrier protein.